A 202-amino-acid chain; its full sequence is Putative 3-methyladenine DNA glycosylase (202 aa).

Belongs to the DNA glycosylase MPG family.

This Alkaliphilus oremlandii (strain OhILAs) (Clostridium oremlandii (strain OhILAs)) protein is Putative 3-methyladenine DNA glycosylase.